Reading from the N-terminus, the 374-residue chain is Anhydro-N-acetylmuramic acid kinase (374 aa).

Position 9–16 (9–16 (GTSLDGID)) interacts with ATP.

This sequence belongs to the anhydro-N-acetylmuramic acid kinase family.

The catalysed reaction is 1,6-anhydro-N-acetyl-beta-muramate + ATP + H2O = N-acetyl-D-muramate 6-phosphate + ADP + H(+). Its pathway is amino-sugar metabolism; 1,6-anhydro-N-acetylmuramate degradation. The protein operates within cell wall biogenesis; peptidoglycan recycling. In terms of biological role, catalyzes the specific phosphorylation of 1,6-anhydro-N-acetylmuramic acid (anhMurNAc) with the simultaneous cleavage of the 1,6-anhydro ring, generating MurNAc-6-P. Is required for the utilization of anhMurNAc either imported from the medium or derived from its own cell wall murein, and thus plays a role in cell wall recycling. The chain is Anhydro-N-acetylmuramic acid kinase from Methylobacterium nodulans (strain LMG 21967 / CNCM I-2342 / ORS 2060).